The following is a 261-amino-acid chain: Chanoclavine-I dehydrogenase easD (261 aa).

An N-terminal signal peptide occupies residues 1–20 (MPSMTSKVFAITGGASGIGA). Ile18 contributes to the NADP(+) binding site. Asn43 is a glycosylation site (N-linked (GlcNAc...) asparagine). 5 residues coordinate NADP(+): Asp66, Arg132, Tyr166, Lys170, and Thr201. Tyr166 acts as the Proton donor in catalysis. Lys170 acts as the Lowers pKa of active site Tyr in catalysis.

This sequence belongs to the short-chain dehydrogenases/reductases (SDR) family. In terms of assembly, homotetramer.

It carries out the reaction chanoclavine-I + NAD(+) = chanoclavine-I aldehyde + NADH + H(+). Its pathway is alkaloid biosynthesis; ergot alkaloid biosynthesis. Its function is as follows. Chanoclavine-I dehydrogenase; part of the gene cluster that mediates the biosynthesis of fungal ergot alkaloid. DmaW catalyzes the first step of ergot alkaloid biosynthesis by condensing dimethylallyl diphosphate (DMAP) and tryptophan to form 4-dimethylallyl-L-tryptophan. The second step is catalyzed by the methyltransferase easF that methylates 4-dimethylallyl-L-tryptophan in the presence of S-adenosyl-L-methionine, resulting in the formation of 4-dimethylallyl-L-abrine. The catalase easC and the FAD-dependent oxidoreductase easE then transform 4-dimethylallyl-L-abrine to chanoclavine-I which is further oxidized by easD in the presence of NAD(+), resulting in the formation of chanoclavine-I aldehyde. Agroclavine dehydrogenase easG then mediates the conversion of chanoclavine-I aldehyde to agroclavine via a non-enzymatic adduct reaction: the substrate is an iminium intermediate that is formed spontaneously from chanoclavine-I aldehyde in the presence of glutathione. The presence of easA is not required to complete this reaction. Further conversion of agroclavine to paspalic acid is a two-step process involving oxidation of agroclavine to elymoclavine and of elymoclavine to paspalic acid, the second step being performed by the elymoclavine oxidase cloA. Paspalic acid is then further converted to D-lysergic acid. Ergopeptines are assembled from D-lysergic acid and three different amino acids by the D-lysergyl-peptide-synthetases composed each of a monomudular and a trimodular nonribosomal peptide synthetase subunit. LpsB and lpsC encode the monomodular subunits responsible for D-lysergic acid activation and incorporation into the ergopeptine backbone. LpsA1 and A2 subunits encode the trimodular nonribosomal peptide synthetase assembling the tripeptide portion of ergopeptines. LpsA1 is responsible for formation of the major ergopeptine, ergotamine, and lpsA2 for alpha-ergocryptine, the minor ergopeptine of the total alkaloid mixture elaborated by C.purpurea. D-lysergyl-tripeptides are assembled by the nonribosomal peptide synthetases and released as N-(D-lysergyl-aminoacyl)-lactams. Cyclolization of the D-lysergyl-tripeptides is performed by the Fe(2+)/2-ketoglutarate-dependent dioxygenase easH which introduces a hydroxyl group into N-(D-lysergyl-aminoacyl)-lactam at alpha-C of the aminoacyl residue followed by spontaneous condensation with the terminal lactam carbonyl group. This is Chanoclavine-I dehydrogenase easD from Claviceps purpurea (strain 20.1) (Ergot fungus).